A 179-amino-acid polypeptide reads, in one-letter code: Large ribosomal subunit protein uL5 (179 aa).

This sequence belongs to the universal ribosomal protein uL5 family. In terms of assembly, part of the 50S ribosomal subunit; part of the 5S rRNA/L5/L18/L25 subcomplex. Contacts the 5S rRNA and the P site tRNA. Forms a bridge to the 30S subunit in the 70S ribosome.

In terms of biological role, this is one of the proteins that bind and probably mediate the attachment of the 5S RNA into the large ribosomal subunit, where it forms part of the central protuberance. In the 70S ribosome it contacts protein S13 of the 30S subunit (bridge B1b), connecting the 2 subunits; this bridge is implicated in subunit movement. Contacts the P site tRNA; the 5S rRNA and some of its associated proteins might help stabilize positioning of ribosome-bound tRNAs. The chain is Large ribosomal subunit protein uL5 from Vibrio atlanticus (strain LGP32) (Vibrio splendidus (strain Mel32)).